The chain runs to 331 residues: Mycothiol acetyltransferase (331 aa).

Glu-33 is a 1D-myo-inositol 2-(L-cysteinylamino)-2-deoxy-alpha-D-glucopyranoside binding site. Residues 59–86 show a composition bias toward low complexity; the sequence is HAAEATAGSAASADPADPADPAAPADPA. The segment at 59–89 is disordered; the sequence is HAAEATAGSAASADPADPADPAAPADPADPA. 115-120 provides a ligand contact to acetyl-CoA; sequence RRGHGS. The N-acetyltransferase domain occupies 183–331; the sequence is LRLDTFEESR…DVQLRATERG (149 aa). 3 residues coordinate 1D-myo-inositol 2-(L-cysteinylamino)-2-deoxy-alpha-D-glucopyranoside: Glu-210, Lys-249, and Glu-261. 265-267 contacts acetyl-CoA; it reads VAT. Position 299 (Tyr-299) interacts with 1D-myo-inositol 2-(L-cysteinylamino)-2-deoxy-alpha-D-glucopyranoside. 304–309 lines the acetyl-CoA pocket; it reads NAPALR.

The protein belongs to the acetyltransferase family. MshD subfamily. Monomer.

It carries out the reaction 1D-myo-inositol 2-(L-cysteinylamino)-2-deoxy-alpha-D-glucopyranoside + acetyl-CoA = mycothiol + CoA + H(+). Catalyzes the transfer of acetyl from acetyl-CoA to desacetylmycothiol (Cys-GlcN-Ins) to form mycothiol. The chain is Mycothiol acetyltransferase from Brachybacterium faecium (strain ATCC 43885 / DSM 4810 / JCM 11609 / LMG 19847 / NBRC 14762 / NCIMB 9860 / 6-10).